The chain runs to 240 residues: Large ribosomal subunit protein uL2 (240 aa).

Residues 1–11 (MGKRLISQNRG) are compositionally biased toward polar residues. 2 disordered regions span residues 1–28 (MGKR…KGAV) and 206–240 (GGGR…TGRK). Basic residues-rich tracts occupy residues 13–28 (GTPK…KGAV) and 224–240 (SPGR…TGRK).

The protein belongs to the universal ribosomal protein uL2 family. Part of the 50S ribosomal subunit. Forms a bridge to the 30S subunit in the 70S ribosome.

Its function is as follows. One of the primary rRNA binding proteins. Required for association of the 30S and 50S subunits to form the 70S ribosome, for tRNA binding and peptide bond formation. It has been suggested to have peptidyltransferase activity; this is somewhat controversial. Makes several contacts with the 16S rRNA in the 70S ribosome. This chain is Large ribosomal subunit protein uL2, found in Methanococcus maripaludis (strain C5 / ATCC BAA-1333).